The primary structure comprises 181 residues: Adenine phosphoribosyltransferase (181 aa).

Belongs to the purine/pyrimidine phosphoribosyltransferase family. Homodimer.

The protein resides in the cytoplasm. It catalyses the reaction AMP + diphosphate = 5-phospho-alpha-D-ribose 1-diphosphate + adenine. The protein operates within purine metabolism; AMP biosynthesis via salvage pathway; AMP from adenine: step 1/1. Functionally, catalyzes a salvage reaction resulting in the formation of AMP, that is energically less costly than de novo synthesis. The chain is Adenine phosphoribosyltransferase from Vibrio vulnificus (strain CMCP6).